Reading from the N-terminus, the 300-residue chain is 2-keto-3-deoxy-L-fuconate dehydrogenase (300 aa).

NAD(+) is bound by residues 63–90 (LITAAGAGIGRESALACARAGAHVIATD) and Asp112. Arg198 provides a ligand contact to substrate. The active-site Proton acceptor is the Tyr201. Residues Lys205 and 234 to 238 (IKTPS) each bind NAD(+). Substrate-binding residues include Arg242 and Arg260.

It belongs to the short-chain dehydrogenases/reductases (SDR) family.

In terms of biological role, plays a role in the catabolism of L-fucose. Catalyzes the NAD(+)-dependent oxidation of 2-keo-3-deoxy-L-fuconate to 2,4-diketo-3-deoxy-L-fuconate. The sequence is that of 2-keto-3-deoxy-L-fuconate dehydrogenase from Xanthomonas campestris pv. campestris (strain ATCC 33913 / DSM 3586 / NCPPB 528 / LMG 568 / P 25).